The sequence spans 419 residues: Creatine kinase S-type, mitochondrial (419 aa).

Residues 1–39 (MAGTFGRLLAGRVTAALFAAAGSGVLTTGYLLNQQNVKA) constitute a mitochondrion transit peptide. The 87-residue stretch at 46 to 132 (KLFPPSADYP…FDPVIKARHN (87 aa)) folds into the Phosphagen kinase N-terminal domain. The Phosphagen kinase C-terminal domain maps to 159 to 401 (YVLSSRVRTG…NYLVDCEKKL (243 aa)). ATP-binding positions include 162 to 166 (SSRVR), His-225, Arg-270, Arg-326, 354 to 359 (RGTGGV), and Asp-369.

This sequence belongs to the ATP:guanido phosphotransferase family. As to quaternary structure, exists as an octamer composed of four MTCK homodimers. Expressed in the leg muscle and heart.

It is found in the mitochondrion inner membrane. It catalyses the reaction creatine + ATP = N-phosphocreatine + ADP + H(+). Reversibly catalyzes the transfer of phosphate between ATP and various phosphogens (e.g. creatine phosphate). Creatine kinase isoenzymes play a central role in energy transduction in tissues with large, fluctuating energy demands, such as skeletal muscle, heart, brain and spermatozoa. The protein is Creatine kinase S-type, mitochondrial (CKMT2) of Gallus gallus (Chicken).